The primary structure comprises 275 residues: NH(3)-dependent NAD(+) synthetase (275 aa).

46–53 provides a ligand contact to ATP; the sequence is GISGGQDS. Residue D52 coordinates Mg(2+). A deamido-NAD(+)-binding site is contributed by R140. Residue T160 coordinates ATP. E165 is a Mg(2+) binding site. The deamido-NAD(+) site is built by K173 and D180. 2 residues coordinate ATP: K189 and T211. 260 to 261 provides a ligand contact to deamido-NAD(+); it reads HK.

Belongs to the NAD synthetase family. As to quaternary structure, homodimer.

The enzyme catalyses deamido-NAD(+) + NH4(+) + ATP = AMP + diphosphate + NAD(+) + H(+). The protein operates within cofactor biosynthesis; NAD(+) biosynthesis; NAD(+) from deamido-NAD(+) (ammonia route): step 1/1. In terms of biological role, catalyzes the ATP-dependent amidation of deamido-NAD to form NAD. Uses ammonia as a nitrogen source. The sequence is that of NH(3)-dependent NAD(+) synthetase from Erwinia tasmaniensis (strain DSM 17950 / CFBP 7177 / CIP 109463 / NCPPB 4357 / Et1/99).